Consider the following 358-residue polypeptide: Cyanide hydratase (358 aa).

Residues 8–287 (YKAAAVNAEP…QGLLFVDIDL (280 aa)) form the CN hydrolase domain. Glu-48 acts as the Proton acceptor in catalysis. The active site involves Lys-130. Cys-165 (nucleophile) is an active-site residue.

This sequence belongs to the carbon-nitrogen hydrolase superfamily. Nitrilase family. Oligomer of dimers, forming left-handed helical fibers.

The enzyme catalyses formamide = hydrogen cyanide + H2O. Catalyzes the hydration of cyanide to formamide. Degradation of cyanide may be important for plant pathogenic fungi in infection of cyanogenic plants. This is Cyanide hydratase from Penicillium rubens (strain ATCC 28089 / DSM 1075 / NRRL 1951 / Wisconsin 54-1255) (Penicillium chrysogenum).